The following is a 324-amino-acid chain: Glutathione synthetase (324 aa).

Positions 133–317 constitute an ATP-grasp domain; it reads KMYALQFTKA…LAHQVIQWVE (185 aa). Position 159-215 (159-215) interacts with ATP; it reads VEAKGATVLKPLGNKAGEGILFLQAGDRNFNSIVELSTQQGRLPVMVQTYLPEAKEG. Mg(2+)-binding residues include Glu288 and Asn290.

This sequence belongs to the prokaryotic GSH synthase family. It depends on Mg(2+) as a cofactor. Mn(2+) serves as cofactor.

It catalyses the reaction gamma-L-glutamyl-L-cysteine + glycine + ATP = glutathione + ADP + phosphate + H(+). The protein operates within sulfur metabolism; glutathione biosynthesis; glutathione from L-cysteine and L-glutamate: step 2/2. The polypeptide is Glutathione synthetase (Nostoc sp. (strain PCC 7120 / SAG 25.82 / UTEX 2576)).